The primary structure comprises 286 residues: Puff II/9-1 protein (286 aa).

The signal sequence occupies residues 1-19 (MKQFIVLTVVLLAIQELQG). Residues 61-235 (ITAIKKDNDF…ENALNTLRCE (175 aa)) are helical. Asn-156 carries an N-linked (GlcNAc...) asparagine glycan.

The chain is Puff II/9-1 protein (II/9-1) from Bradysia coprophila (Dark-winged fungus gnat).